Consider the following 160-residue polypeptide: uncharacterized protein (160 aa).

This is an uncharacterized protein from Mycobacterium tuberculosis (strain ATCC 25618 / H37Rv).